The primary structure comprises 531 residues: MNSTNFFSHDLYLYHQVIRCIVKYRNLLLAYSGGMDSTVLLDILTKLKKYFDFQVKGTSKILPFFLRAVYVHHGLNNKADYWADHCLQQCKMRNVPFHIIYINHSDLSKIKCNIEAMARDFRYKALFNALKPEEVLLTAHHMNDQVETVLLALKRGSGPAGLSGMTQDILYQHNEYQHRLLRPLLKCSHIQLQEYAYRKKLTWVEDDTNTDVRFDRNFLRVQVIPLFQKRWPAFNKVVSRTAQLCREQENLLHELLSESLDQLIDIDNALFFYPLIKYSDVRRRVVLRYWLSRFFINMPSYKLLDCIWKEVALSKVDSQSILHVGKKYICRRFRKKLYILPDNMKSSLDIFLLPWKNFNNTILLPNELGLLTSQSLTVNLFLFYKNLIPYTHLNMLSDIFLPRYHNNVGDEKILSVCFIRPPMNNEKVSIQFGYIQGLLHLANRDRGRKLKKIWQEYNVPPWLRNHIPLLFYNDTLISAIGIFITRNGSCIVNMNNLICNNKKSIILQKITWVQSDFYYRIFKNFVYNTLR.

Residue 32 to 37 (SGGMDS) participates in ATP binding.

It belongs to the tRNA(Ile)-lysidine synthase family.

Its subcellular location is the cytoplasm. The enzyme catalyses cytidine(34) in tRNA(Ile2) + L-lysine + ATP = lysidine(34) in tRNA(Ile2) + AMP + diphosphate + H(+). Ligates lysine onto the cytidine present at position 34 of the AUA codon-specific tRNA(Ile) that contains the anticodon CAU, in an ATP-dependent manner. Cytidine is converted to lysidine, thus changing the amino acid specificity of the tRNA from methionine to isoleucine. This Blochmanniella floridana protein is tRNA(Ile)-lysidine synthase.